Here is a 189-residue protein sequence, read N- to C-terminus: dCTP deaminase (189 aa).

DCTP-binding positions include 112-117 (KSTYAR), 136-138 (TLE), Q157, Y171, and Q181. E138 serves as the catalytic Proton donor/acceptor.

Belongs to the dCTP deaminase family. As to quaternary structure, homotrimer.

It carries out the reaction dCTP + H2O + H(+) = dUTP + NH4(+). Its pathway is pyrimidine metabolism; dUMP biosynthesis; dUMP from dCTP (dUTP route): step 1/2. In terms of biological role, catalyzes the deamination of dCTP to dUTP. This Burkholderia thailandensis (strain ATCC 700388 / DSM 13276 / CCUG 48851 / CIP 106301 / E264) protein is dCTP deaminase.